A 587-amino-acid polypeptide reads, in one-letter code: UDP-N-acetylmuramoylalanine--D-glutamate ligase (587 aa).

Residues 124–147 (DHLVPPESPLSDASDISDASDATD) form a disordered region. Residues 132-147 (PLSDASDISDASDATD) are compositionally biased toward low complexity. 214–220 (GTNGKTT) contacts ATP.

This sequence belongs to the MurCDEF family.

The protein resides in the cytoplasm. It carries out the reaction UDP-N-acetyl-alpha-D-muramoyl-L-alanine + D-glutamate + ATP = UDP-N-acetyl-alpha-D-muramoyl-L-alanyl-D-glutamate + ADP + phosphate + H(+). Its pathway is cell wall biogenesis; peptidoglycan biosynthesis. Functionally, cell wall formation. Catalyzes the addition of glutamate to the nucleotide precursor UDP-N-acetylmuramoyl-L-alanine (UMA). In Polaromonas sp. (strain JS666 / ATCC BAA-500), this protein is UDP-N-acetylmuramoylalanine--D-glutamate ligase.